The sequence spans 467 residues: Phytase A (467 aa).

The first 23 residues, 1–23, serve as a signal peptide directing secretion; the sequence is MGVSAVLLPLYLLAGVTSGLAVP. A glycan (N-linked (GlcNAc...) asparagine) is linked at N27. An intrachain disulfide couples C31 to C40. 1D-myo-inositol hexakisphosphate contacts are provided by Q50 and Y51. Residue N59 is glycosylated (N-linked (GlcNAc...) asparagine). Cystine bridges form between C71-C414, C215-C465, C264-C282, and C436-C444. 4 residues coordinate 1D-myo-inositol hexakisphosphate: R81, H82, R85, and T88. Residue H82 is the Nucleophile of the active site. 2 N-linked (GlcNAc...) asparagine glycosylation sites follow: N105 and N120. Residue R165 coordinates 1D-myo-inositol hexakisphosphate. N207 and N230 each carry an N-linked (GlcNAc...) asparagine glycan. Residue K301 participates in 1D-myo-inositol hexakisphosphate binding. Residues N339 and N352 are each glycosylated (N-linked (GlcNAc...) asparagine). 2 residues coordinate 1D-myo-inositol hexakisphosphate: H361 and D362. N-linked (GlcNAc...) asparagine glycosylation is found at N376 and N388.

Belongs to the histidine acid phosphatase family. As to quaternary structure, monomer.

Its subcellular location is the secreted. The catalysed reaction is 1D-myo-inositol hexakisphosphate + H2O = 1D-myo-inositol 1,2,4,5,6-pentakisphosphate + phosphate. The enzyme catalyses 1D-myo-inositol 1,2,4,5,6-pentakisphosphate + H2O = 1D-myo-inositol 1,2,5,6-tetrakisphosphate + phosphate. It catalyses the reaction 1D-myo-inositol 1,2,5,6-tetrakisphosphate + H2O = 1D-myo-inositol 1,2,6-trisphosphate + phosphate. It carries out the reaction 1D-myo-inositol 1,2,6-trisphosphate + H2O = 1D-myo-inositol 1,2-bisphosphate + phosphate. The catalysed reaction is 1D-myo-inositol 1,2-bisphosphate + H2O = 1D-myo-inositol 2-phosphate + phosphate. Catalyzes the phosphate monoester hydrolysis of phytic acid (myo-inositol hexakisphosphate), which results in the stepwise formation of myo-inositol pentakis-, tetrakis-, tris-, bis-, and monophosphates, as well as the liberation of inorganic phosphate. Myo-inositol 2-monophosphate is the end product. This Aspergillus awamori (Black koji mold) protein is Phytase A (phyA).